The sequence spans 550 residues: CTP synthase (550 aa).

The tract at residues 1-270 (MTKFVFVTGG…DRLICEELRL (270 aa)) is amidoligase domain. S13 is a binding site for CTP. S13 provides a ligand contact to UTP. ATP contacts are provided by residues 14–19 (SLGKGI) and D71. Residues D71 and E144 each contribute to the Mg(2+) site. CTP is bound by residues 151-153 (DIE), 191-196 (KTKPTQ), and K227. Residues 191–196 (KTKPTQ) and K227 contribute to the UTP site. Residues 295–547 (TIGMVGKYVD…VEAALAGQQR (253 aa)) form the Glutamine amidotransferase type-1 domain. G356 is an L-glutamine binding site. The Nucleophile; for glutamine hydrolysis role is filled by C383. Residues 384–387 (LGMQ), E407, and R473 each bind L-glutamine. Catalysis depends on residues H520 and E522.

The protein belongs to the CTP synthase family. Homotetramer.

It catalyses the reaction UTP + L-glutamine + ATP + H2O = CTP + L-glutamate + ADP + phosphate + 2 H(+). It carries out the reaction L-glutamine + H2O = L-glutamate + NH4(+). The enzyme catalyses UTP + NH4(+) + ATP = CTP + ADP + phosphate + 2 H(+). The protein operates within pyrimidine metabolism; CTP biosynthesis via de novo pathway; CTP from UDP: step 2/2. With respect to regulation, allosterically activated by GTP, when glutamine is the substrate; GTP has no effect on the reaction when ammonia is the substrate. The allosteric effector GTP functions by stabilizing the protein conformation that binds the tetrahedral intermediate(s) formed during glutamine hydrolysis. Inhibited by the product CTP, via allosteric rather than competitive inhibition. Catalyzes the ATP-dependent amination of UTP to CTP with either L-glutamine or ammonia as the source of nitrogen. Regulates intracellular CTP levels through interactions with the four ribonucleotide triphosphates. In Cupriavidus pinatubonensis (strain JMP 134 / LMG 1197) (Cupriavidus necator (strain JMP 134)), this protein is CTP synthase.